A 248-amino-acid polypeptide reads, in one-letter code: Probable transcriptional regulatory protein LAR_0538 (248 aa).

The disordered stretch occupies residues 1–22 (MSGHSKWHNIQGRKNAQDAKRG).

This sequence belongs to the TACO1 family.

Its subcellular location is the cytoplasm. This chain is Probable transcriptional regulatory protein LAR_0538, found in Limosilactobacillus reuteri subsp. reuteri (strain JCM 1112) (Lactobacillus reuteri).